The primary structure comprises 375 residues: GDP-mannose transporter GONST2 (375 aa).

The next 9 helical transmembrane spans lie at 79-99 (LVSGAAYCISSCSMIILNKIV), 112-132 (MLYQNLISCLVVAVLDISGVV), 141-161 (LIRVWMPVNVIFVGMLVSGMY), 165-185 (YINVAMVTILKNATNILTGIG), 199-219 (WAAMFMMIISAISGGITDLTF), 262-282 (MVLLNNLLSIPFGIILIILLG), 300-320 (VVATASGFLGLAISFTSMWFL), 327-347 (TYSLVGSLNKVPISLAGLVLF), and 349-369 (VPLSLPNLFSILFGLFAGVVF).

It belongs to the nucleotide-sugar transporter family. GDP-Mannose:GMP antiporter (GMA) (TC 2.A.7.13) subfamily. Expressed in rosette leaves, stems, flowers and siliques.

It is found in the golgi apparatus membrane. Its function is as follows. GDP-mannose transporter that may be involved in the import of GDP-mannose from the cytoplasm into the Golgi lumen. In Arabidopsis thaliana (Mouse-ear cress), this protein is GDP-mannose transporter GONST2.